The primary structure comprises 228 residues: HTH-type transcriptional activator FasR (228 aa).

A disordered region spans residues 1 to 39 (MSDLAKTAQRRALRSSGSARPDEDVPAPNRRGNRLPRDE). In terms of domain architecture, HTH tetR-type spans 38–98 (DERRGQLLVV…AVLHRHVENL (61 aa)). Residues 61 to 80 (GMDEIADRAGVSKPVLYQHF) constitute a DNA-binding region (H-T-H motif).

As to quaternary structure, homodimer.

With respect to regulation, fasR:DNA binding is regulated by long-chain acyl-CoAs (C14- to C26-CoA), which act as effector molecules that modulate the affinity of FasR for its DNA binding sequences and therefore modulate the expression of the essential fas-acpS operon. FasR activity is not affected by mycolic acid biosynthesis intermediates. Functionally, transcriptional activator that plays a central role in sensing mycobacterial long-chain fatty acids and regulating lipid biosynthesis. Activates the expression of the genes encoding the fatty acid synthase (fas) and the 4-phosphopantetheinyl transferase (acpS), whose products are involved in the fatty acid and mycolic acid biosynthesis. Specifically binds to three conserved operator sequences present in the fas-acpS promoter region. Not essential for M.tuberculosis viability, although it is required for the optimal growth in vitro and for virulence in macrophages and in a mouse model of infection. The chain is HTH-type transcriptional activator FasR from Mycobacterium tuberculosis (strain ATCC 25618 / H37Rv).